A 401-amino-acid polypeptide reads, in one-letter code: tRNA(Met) cytidine acetate ligase (401 aa).

Residues 7 to 20 (IVEYNPLHNGHLYH), Gly-102, Asn-164, and Arg-189 contribute to the ATP site.

The protein belongs to the TmcAL family.

The protein resides in the cytoplasm. It catalyses the reaction cytidine(34) in elongator tRNA(Met) + acetate + ATP = N(4)-acetylcytidine(34) in elongator tRNA(Met) + AMP + diphosphate. Catalyzes the formation of N(4)-acetylcytidine (ac(4)C) at the wobble position of elongator tRNA(Met), using acetate and ATP as substrates. First activates an acetate ion to form acetyladenylate (Ac-AMP) and then transfers the acetyl group to tRNA to form ac(4)C34. The sequence is that of tRNA(Met) cytidine acetate ligase from Caldanaerobacter subterraneus subsp. tengcongensis (strain DSM 15242 / JCM 11007 / NBRC 100824 / MB4) (Thermoanaerobacter tengcongensis).